Here is a 312-residue protein sequence, read N- to C-terminus: tRNA uridine(34) hydroxylase (312 aa).

Residues 130 to 225 enclose the Rhodanese domain; that stretch reads RGDEVVFFDG…YGEQFGNKGL (96 aa). Residue Cys185 is the Cysteine persulfide intermediate of the active site.

Belongs to the TrhO family.

It carries out the reaction uridine(34) in tRNA + AH2 + O2 = 5-hydroxyuridine(34) in tRNA + A + H2O. In terms of biological role, catalyzes oxygen-dependent 5-hydroxyuridine (ho5U) modification at position 34 in tRNAs. In Corynebacterium glutamicum (strain ATCC 13032 / DSM 20300 / JCM 1318 / BCRC 11384 / CCUG 27702 / LMG 3730 / NBRC 12168 / NCIMB 10025 / NRRL B-2784 / 534), this protein is tRNA uridine(34) hydroxylase.